We begin with the raw amino-acid sequence, 347 residues long: MTEFFMGLGLSYEWAWGISTIAGILLIALPLMLGVAMIIYADRKIWAAMALRRGPNVVGPLGLLQSFADGLKVFLQETIIPTAANKGLFLIAPIITFTVALMAWAVIPFNSGAVLANINVGLLYVLAISSLGVYGVVIAGWSSNSKYPFFSAMRASAQMISYEVSIGFILICVVLWAGTFNLNDIVKAQQSHVWIINGFVANPLLFPMWVMFLISGMAETARAPFDLTEAESELVAGYQTEYSSMAFALYWLGEYANVLLMCALNAVLFWGGYLPPLDIPVLYLVPGFVWLLLKILFFFFIFSWVKATVPRYRYDQLMRLGWKVFLPVSLLFVFLVSGYLMATGHFA.

8 helical membrane-spanning segments follow: residues 21–41 (IAGI…IIYA), 87–107 (GLFL…WAVI), 120–140 (VGLL…VIAG), 160–180 (ISYE…AGTF), 194–214 (WIIN…MFLI), 259–279 (LLMC…PLDI), 282–302 (LYLV…FFIF), and 324–344 (VFLP…MATG).

This sequence belongs to the complex I subunit 1 family. NDH-1 is composed of 14 different subunits. Subunits NuoA, H, J, K, L, M, N constitute the membrane sector of the complex.

The protein resides in the cell inner membrane. The catalysed reaction is a quinone + NADH + 5 H(+)(in) = a quinol + NAD(+) + 4 H(+)(out). Functionally, NDH-1 shuttles electrons from NADH, via FMN and iron-sulfur (Fe-S) centers, to quinones in the respiratory chain. The immediate electron acceptor for the enzyme in this species is believed to be ubiquinone. Couples the redox reaction to proton translocation (for every two electrons transferred, four hydrogen ions are translocated across the cytoplasmic membrane), and thus conserves the redox energy in a proton gradient. This subunit may bind ubiquinone. In Novosphingobium aromaticivorans (strain ATCC 700278 / DSM 12444 / CCUG 56034 / CIP 105152 / NBRC 16084 / F199), this protein is NADH-quinone oxidoreductase subunit H.